The chain runs to 109 residues: Cell division suppressor protein YneA (109 aa).

Positions 39-90 (SEVNVSEGDSLWALADQYAGKSDMAKADFVSWVEKENNLADGHVEAGESVVI) constitute a LysM domain.

It belongs to the YneA family.

It is found in the cytoplasm. In terms of biological role, inhibits cell division during the SOS response. Affects a later stage of the cell division protein assembly, after the assembly of the Z ring, by probably suppressing recruitment of FtsL and/or DivIC to the division machinery. This Listeria monocytogenes serotype 4b (strain F2365) protein is Cell division suppressor protein YneA.